Reading from the N-terminus, the 220-residue chain is Adenylate kinase (220 aa).

13 to 18 (GAGKGT) contacts ATP. The tract at residues 33–62 (STGDILRAAVKEGTPLGLEAQSYMNRGALV) is NMP. Residues threonine 34, arginine 39, 60-62 (ALV), 88-91 (GFPR), and glutamine 95 each bind AMP. The interval 129-170 (GRRTCPLCKRIFHVRFNPPPAAPPFCTDHTDCPSELVQRPDD) is LID. Arginine 130 contributes to the ATP binding site. 2 residues coordinate Zn(2+): cysteine 133 and cysteine 136. 139 to 140 (IF) contributes to the ATP binding site. Zn(2+)-binding residues include aspartate 156 and cysteine 160. Residues arginine 167 and arginine 178 each coordinate AMP. ATP is bound at residue arginine 206.

It belongs to the adenylate kinase family. As to quaternary structure, monomer.

The protein resides in the cytoplasm. The catalysed reaction is AMP + ATP = 2 ADP. It functions in the pathway purine metabolism; AMP biosynthesis via salvage pathway; AMP from ADP: step 1/1. In terms of biological role, catalyzes the reversible transfer of the terminal phosphate group between ATP and AMP. Plays an important role in cellular energy homeostasis and in adenine nucleotide metabolism. The sequence is that of Adenylate kinase from Gloeobacter violaceus (strain ATCC 29082 / PCC 7421).